A 144-amino-acid polypeptide reads, in one-letter code: Maximins 5/H4 type 3 (144 aa).

A signal peptide spans 1–18 (MNFKYIVAVSFLIASAYA). 2 consecutive propeptides follow at residues 19–43 (RSVQ…REIR) and 74–123 (TAED…KEKR). A Leucine amide modification is found at Leu143.

It belongs to the bombinin family. In terms of tissue distribution, expressed by the skin glands.

The protein resides in the secreted. Maximin-5 shows antibacterial activity against both Gram-positive and Gram-negative bacteria. The only exception is the resistance of E.coli. Also shows antimicrobial activity against fungi C.albicans, A.flavus and P.uticale. It has little hemolytic activity. It does not possess a significant cytotoxicity against tumor cell lines. It does not possess a significant anti-HIV activity. Functionally, maximin-H4 shows antibacterial activity against both Gram-positive and Gram-negative bacteria. It also shows antimicrobial activity against the fungus C.albicans. Shows strong hemolytic activity. This chain is Maximins 5/H4 type 3, found in Bombina maxima (Giant fire-bellied toad).